The following is a 74-amino-acid chain: MSRRRILILVLVTMLVKTMAGMESKWVETTYEIKKRSGTSEKERESGRLLGVVKRLIVGFRSPFRGRRAISEQT.

The first 21 residues, 1–21, serve as a signal peptide directing secretion; that stretch reads MSRRRILILVLVTMLVKTMAG. The propeptide occupies 22-33; sequence MESKWVETTYEI. Arginine 65 carries the arginine amide modification. A propeptide spanning residues 69–74 is cleaved from the precursor; sequence AISEQT.

The protein belongs to the non-disulfide-bridged peptide (NDBP) superfamily. Medium-length antimicrobial peptide (group 3) family. Expressed by the venom gland.

The protein localises to the secreted. It localises to the target cell membrane. Its function is as follows. Possesses antimicrobial activity against both Gram-negative and Gram-positive bacteria, as well as against the fungus C.tropicalis. Also possesses a relatively high hemolytic activity. May act by disrupting the integrity of the bacterial cell membrane. The polypeptide is Antimicrobial peptide HsAp4 (Heterometrus spinifer (Asia giant forest scorpion)).